The chain runs to 141 residues: Large ribosomal subunit protein uL11 (141 aa).

The protein belongs to the universal ribosomal protein uL11 family. In terms of assembly, part of the ribosomal stalk of the 50S ribosomal subunit. Interacts with L10 and the large rRNA to form the base of the stalk. L10 forms an elongated spine to which L12 dimers bind in a sequential fashion forming a multimeric L10(L12)X complex. One or more lysine residues are methylated.

In terms of biological role, forms part of the ribosomal stalk which helps the ribosome interact with GTP-bound translation factors. The polypeptide is Large ribosomal subunit protein uL11 (Natranaerobius thermophilus (strain ATCC BAA-1301 / DSM 18059 / JW/NM-WN-LF)).